The following is a 161-amino-acid chain: MSRVCHKLEDFMRQRRIAREIALQVLYSLEVVEMEAGEAIELYWAHYEAPMDARPFSSLLIEGAWKHRDQIDSLIGGCSANWSIARMSKVDKSILRMAVFELCFCEDIPPKVTMNEAIDLGKVYGSENSGSFINGILDALYAKIHKKNDEQEIAPPPERSE.

The protein belongs to the NusB family.

Its function is as follows. Involved in transcription antitermination. Required for transcription of ribosomal RNA (rRNA) genes. Binds specifically to the boxA antiterminator sequence of the ribosomal RNA (rrn) operons. The polypeptide is Transcription antitermination protein NusB (Syntrophus aciditrophicus (strain SB)).